The sequence spans 456 residues: Arginine biosynthesis bifunctional protein ArgJ, mitochondrial (456 aa).

Substrate is bound by residues threonine 184, lysine 213, threonine 224, glutamate 311, asparagine 451, and threonine 456. Threonine 224 acts as the Nucleophile in catalysis.

This sequence belongs to the ArgJ family. As to quaternary structure, heterodimer of an alpha and a beta chain. The alpha and beta chains are autoproteolytically processed from a single precursor protein within the mitochondrion.

It localises to the mitochondrion matrix. It carries out the reaction N(2)-acetyl-L-ornithine + L-glutamate = N-acetyl-L-glutamate + L-ornithine. The enzyme catalyses L-glutamate + acetyl-CoA = N-acetyl-L-glutamate + CoA + H(+). It functions in the pathway amino-acid biosynthesis; L-arginine biosynthesis; L-ornithine and N-acetyl-L-glutamate from L-glutamate and N(2)-acetyl-L-ornithine (cyclic): step 1/1. The protein operates within amino-acid biosynthesis; L-arginine biosynthesis; N(2)-acetyl-L-ornithine from L-glutamate: step 1/4. Its function is as follows. Catalyzes two activities which are involved in the cyclic version of arginine biosynthesis: the synthesis of acetylglutamate from glutamate and acetyl-CoA, and of ornithine by transacetylation between acetylornithine and glutamate. The protein is Arginine biosynthesis bifunctional protein ArgJ, mitochondrial of Neosartorya fischeri (strain ATCC 1020 / DSM 3700 / CBS 544.65 / FGSC A1164 / JCM 1740 / NRRL 181 / WB 181) (Aspergillus fischerianus).